Reading from the N-terminus, the 161-residue chain is Nucleotide-binding protein Ajs_2750 (161 aa).

Belongs to the YajQ family.

Nucleotide-binding protein. The chain is Nucleotide-binding protein Ajs_2750 from Acidovorax sp. (strain JS42).